Consider the following 517-residue polypeptide: NAD(P)H-quinone oxidoreductase subunit 2 (517 aa).

The next 14 membrane-spanning stretches (helical) occupy residues 16 to 36 (ILPEGIVIITLVGVLVGDLIF), 43 to 63 (WLPYMAIIGLLASIVALYLAW), 80 to 100 (LSIVFRAIIALSTAVTILMSI), 110 to 130 (LAEFIAIMLTATLGGMFLCGA), 133 to 153 (LVMIFISLEMLSISSYLMTGY), 168 to 188 (LLIGASSSAIFLYGVSLLYGL), 211 to 231 (LGLAIALVFVIAGIAFKISAV), 245 to 265 (PTPVVAFLSVGSKAAGFALAI), 279 to 299 (WHFVFTALAILSMVLGNVVAL), 307 to 327 (MLAYSSIGQAGFVMIGLVAGT), 335 to 355 (VFYLLVYLFMNLGAFACIILF), 379 to 399 (LALSICLLSLGGIPPLAGFFG), 401 to 421 (IYLFWAGWQAELYGLVILGLV), and 467 to 487 (VGIVLTLIATSLAGILSNPLF).

It belongs to the complex I subunit 2 family. As to quaternary structure, NDH-1 can be composed of about 15 different subunits; different subcomplexes with different compositions have been identified which probably have different functions.

Its subcellular location is the cellular thylakoid membrane. It catalyses the reaction a plastoquinone + NADH + (n+1) H(+)(in) = a plastoquinol + NAD(+) + n H(+)(out). The enzyme catalyses a plastoquinone + NADPH + (n+1) H(+)(in) = a plastoquinol + NADP(+) + n H(+)(out). In terms of biological role, NDH-1 shuttles electrons from an unknown electron donor, via FMN and iron-sulfur (Fe-S) centers, to quinones in the respiratory and/or the photosynthetic chain. The immediate electron acceptor for the enzyme in this species is believed to be plastoquinone. Couples the redox reaction to proton translocation, and thus conserves the redox energy in a proton gradient. Cyanobacterial NDH-1 also plays a role in inorganic carbon-concentration. The sequence is that of NAD(P)H-quinone oxidoreductase subunit 2 from Rippkaea orientalis (strain PCC 8801 / RF-1) (Cyanothece sp. (strain PCC 8801)).